The primary structure comprises 61 residues: Small ribosomal subunit protein uS14 (61 aa).

The Zn(2+) site is built by C24, C27, C40, and C43.

It belongs to the universal ribosomal protein uS14 family. Zinc-binding uS14 subfamily. As to quaternary structure, part of the 30S ribosomal subunit. Contacts proteins S3 and S10. Requires Zn(2+) as cofactor.

In terms of biological role, binds 16S rRNA, required for the assembly of 30S particles and may also be responsible for determining the conformation of the 16S rRNA at the A site. The sequence is that of Small ribosomal subunit protein uS14 from Ureaplasma parvum serovar 3 (strain ATCC 27815 / 27 / NCTC 11736).